A 245-amino-acid polypeptide reads, in one-letter code: Ribonuclease PH (245 aa).

Phosphate-binding positions include Arg-86 and 124-126 (GTR).

The protein belongs to the RNase PH family. Homohexameric ring arranged as a trimer of dimers.

The catalysed reaction is tRNA(n+1) + phosphate = tRNA(n) + a ribonucleoside 5'-diphosphate. Its function is as follows. Phosphorolytic 3'-5' exoribonuclease that plays an important role in tRNA 3'-end maturation. Removes nucleotide residues following the 3'-CCA terminus of tRNAs; can also add nucleotides to the ends of RNA molecules by using nucleoside diphosphates as substrates, but this may not be physiologically important. Probably plays a role in initiation of 16S rRNA degradation (leading to ribosome degradation) during starvation. The protein is Ribonuclease PH of Bacillus velezensis (strain DSM 23117 / BGSC 10A6 / LMG 26770 / FZB42) (Bacillus amyloliquefaciens subsp. plantarum).